Consider the following 221-residue polypeptide: Histidine biosynthesis bifunctional protein HisIE (221 aa).

The tract at residues 1–129 (MAYSKNFSIE…AKKTSPFSNI (129 aa)) is phosphoribosyl-AMP cyclohydrolase. Positions 130–221 (CSELFDTLHE…VLESRRGKNN (92 aa)) are phosphoribosyl-ATP pyrophosphohydrolase.

The protein in the N-terminal section; belongs to the PRA-CH family. This sequence in the C-terminal section; belongs to the PRA-PH family.

The protein resides in the cytoplasm. It carries out the reaction 1-(5-phospho-beta-D-ribosyl)-ATP + H2O = 1-(5-phospho-beta-D-ribosyl)-5'-AMP + diphosphate + H(+). It catalyses the reaction 1-(5-phospho-beta-D-ribosyl)-5'-AMP + H2O = 1-(5-phospho-beta-D-ribosyl)-5-[(5-phospho-beta-D-ribosylamino)methylideneamino]imidazole-4-carboxamide. The protein operates within amino-acid biosynthesis; L-histidine biosynthesis; L-histidine from 5-phospho-alpha-D-ribose 1-diphosphate: step 2/9. Its pathway is amino-acid biosynthesis; L-histidine biosynthesis; L-histidine from 5-phospho-alpha-D-ribose 1-diphosphate: step 3/9. This chain is Histidine biosynthesis bifunctional protein HisIE, found in Prochlorococcus marinus subsp. pastoris (strain CCMP1986 / NIES-2087 / MED4).